A 139-amino-acid chain; its full sequence is D-ribose pyranase (139 aa).

His-20 functions as the Proton donor in the catalytic mechanism. Residues Asp-28, His-106, and 128-130 contribute to the substrate site; that span reads FAN.

It belongs to the RbsD / FucU family. RbsD subfamily. Homodecamer.

It localises to the cytoplasm. It catalyses the reaction beta-D-ribopyranose = beta-D-ribofuranose. It participates in carbohydrate metabolism; D-ribose degradation; D-ribose 5-phosphate from beta-D-ribopyranose: step 1/2. Catalyzes the interconversion of beta-pyran and beta-furan forms of D-ribose. This Yersinia pseudotuberculosis serotype O:1b (strain IP 31758) protein is D-ribose pyranase.